A 1102-amino-acid chain; its full sequence is DNA-directed RNA polymerase subunit beta (1102 aa).

The disordered stretch occupies residues 1081–1102; that stretch reads LPGKRTPSRPIYESLSTEGNQD.

This sequence belongs to the RNA polymerase beta chain family. In terms of assembly, in cyanobacteria the RNAP catalytic core is composed of 2 alpha, 1 beta, 1 beta', 1 gamma and 1 omega subunit. When a sigma factor is associated with the core the holoenzyme is formed, which can initiate transcription.

The enzyme catalyses RNA(n) + a ribonucleoside 5'-triphosphate = RNA(n+1) + diphosphate. Its function is as follows. DNA-dependent RNA polymerase catalyzes the transcription of DNA into RNA using the four ribonucleoside triphosphates as substrates. This is DNA-directed RNA polymerase subunit beta from Trichodesmium erythraeum (strain IMS101).